The primary structure comprises 650 residues: 1-deoxy-D-xylulose-5-phosphate synthase (650 aa).

Residues histidine 87 and 128–130 contribute to the thiamine diphosphate site; that span reads GHS. Residue aspartate 159 participates in Mg(2+) binding. Residues 160 to 161, asparagine 188, tyrosine 299, and glutamate 383 each bind thiamine diphosphate; that span reads GS. Mg(2+) is bound at residue asparagine 188.

Belongs to the transketolase family. DXPS subfamily. As to quaternary structure, homodimer. Mg(2+) serves as cofactor. It depends on thiamine diphosphate as a cofactor.

It carries out the reaction D-glyceraldehyde 3-phosphate + pyruvate + H(+) = 1-deoxy-D-xylulose 5-phosphate + CO2. The protein operates within metabolic intermediate biosynthesis; 1-deoxy-D-xylulose 5-phosphate biosynthesis; 1-deoxy-D-xylulose 5-phosphate from D-glyceraldehyde 3-phosphate and pyruvate: step 1/1. Functionally, catalyzes the acyloin condensation reaction between C atoms 2 and 3 of pyruvate and glyceraldehyde 3-phosphate to yield 1-deoxy-D-xylulose-5-phosphate (DXP). The polypeptide is 1-deoxy-D-xylulose-5-phosphate synthase (Syntrophus aciditrophicus (strain SB)).